The chain runs to 371 residues: MYNESPIIRRKSSRIYVGDVPIGDGAPIAVQSMTNTRTTDVAATVAQIKALENVGADIVRVSVPTMDAAEAFKLIKQQTNVPLVADIHFDYRIALKVAEYGVDCLRINPGNIGNEERIRSVVECARDKNIPIRIGVNGGSLEKELMDKYKEPTPEALLESAMRHVDILDRLNFDQFKVSVKASDVFLAVESYRLLAKQIVQPLHLGITEAGGARAGSVKSAVGLGMLLADGIGDTLRISLAADPVEEIKVGFDILKSLRIRSRGINFIACPSCSRQEFDVISTVNELEQRLEDVVTPMDVSIIGCVVNGPGEALISDIGLTGGNRMSGYYKDGVRQKERFDNNNIVDQLEAKIRAKVAMSESRIPAQDVTK.

Residues C270, C273, C305, and E312 each coordinate [4Fe-4S] cluster.

This sequence belongs to the IspG family. [4Fe-4S] cluster is required as a cofactor.

It catalyses the reaction (2E)-4-hydroxy-3-methylbut-2-enyl diphosphate + oxidized [flavodoxin] + H2O + 2 H(+) = 2-C-methyl-D-erythritol 2,4-cyclic diphosphate + reduced [flavodoxin]. It functions in the pathway isoprenoid biosynthesis; isopentenyl diphosphate biosynthesis via DXP pathway; isopentenyl diphosphate from 1-deoxy-D-xylulose 5-phosphate: step 5/6. Converts 2C-methyl-D-erythritol 2,4-cyclodiphosphate (ME-2,4cPP) into 1-hydroxy-2-methyl-2-(E)-butenyl 4-diphosphate. This chain is 4-hydroxy-3-methylbut-2-en-1-yl diphosphate synthase (flavodoxin), found in Shewanella piezotolerans (strain WP3 / JCM 13877).